The chain runs to 467 residues: Uronate isomerase (467 aa).

Belongs to the metallo-dependent hydrolases superfamily. Uronate isomerase family.

The catalysed reaction is D-glucuronate = D-fructuronate. It carries out the reaction aldehydo-D-galacturonate = keto-D-tagaturonate. Its pathway is carbohydrate metabolism; pentose and glucuronate interconversion. This Geobacillus thermodenitrificans (strain NG80-2) protein is Uronate isomerase.